Consider the following 252-residue polypeptide: MMLHAQHMPGQPGAPSLVFLHGFSGDCREWQPVGEQFHGCSRLYIDLPGHGGSAAIPVGGFADVIRLLRATLISYNILKFWLVGYSLGGRVAMMAACQGIPGLCGLVVEGGHPGLQNERARAERRLSDGRWAERFRHEPLTEVFHDWYQQPVFASLTAQQRQALTALRSQNNGETLAAMLEATSLAVQPDLREALNALAFPFYYLCGERDSKFRALAQEVAATCHVIRNAGHNAHRENPAGVVDSLAQILRL.

This sequence belongs to the AB hydrolase superfamily. MenH family. Monomer.

It carries out the reaction 5-enolpyruvoyl-6-hydroxy-2-succinyl-cyclohex-3-ene-1-carboxylate = (1R,6R)-6-hydroxy-2-succinyl-cyclohexa-2,4-diene-1-carboxylate + pyruvate. It participates in quinol/quinone metabolism; 1,4-dihydroxy-2-naphthoate biosynthesis; 1,4-dihydroxy-2-naphthoate from chorismate: step 3/7. The protein operates within quinol/quinone metabolism; menaquinone biosynthesis. In terms of biological role, catalyzes a proton abstraction reaction that results in 2,5-elimination of pyruvate from 2-succinyl-5-enolpyruvyl-6-hydroxy-3-cyclohexene-1-carboxylate (SEPHCHC) and the formation of 2-succinyl-6-hydroxy-2,4-cyclohexadiene-1-carboxylate (SHCHC). The polypeptide is 2-succinyl-6-hydroxy-2,4-cyclohexadiene-1-carboxylate synthase (Salmonella paratyphi A (strain ATCC 9150 / SARB42)).